We begin with the raw amino-acid sequence, 75 residues long: Large ribosomal subunit protein uL24c (75 aa).

It belongs to the universal ribosomal protein uL24 family. Part of the 50S ribosomal subunit.

It is found in the plastid. The protein resides in the chloroplast. Functionally, one of two assembly initiator proteins, it binds directly to the 5'-end of the 23S rRNA, where it nucleates assembly of the 50S subunit. This is Large ribosomal subunit protein uL24c (rpl24) from Cyanidioschyzon merolae (strain NIES-3377 / 10D) (Unicellular red alga).